The sequence spans 497 residues: Acetyl-coenzyme A carboxylase carboxyl transferase subunit beta, chloroplastic (497 aa).

Positions 30–50 (GPVENTTVNEDPTRNDTDKNI) are disordered. Residues 40–50 (DPTRNDTDKNI) are compositionally biased toward basic and acidic residues. One can recognise a CoA carboxyltransferase N-terminal domain in the interval 230–497 (VQCECENCYG…FFPLNQNSIK (268 aa)). Residues Cys232, Cys237, Cys253, and Cys256 each coordinate Zn(2+). Residues 232 to 256 (CECENCYGVNYKKSLNSKMNICEQC) form a C4-type zinc finger.

This sequence belongs to the AccD/PCCB family. Acetyl-CoA carboxylase is a heterohexamer composed of biotin carboxyl carrier protein, biotin carboxylase and 2 subunits each of ACCase subunit alpha and ACCase plastid-coded subunit beta (accD). Zn(2+) is required as a cofactor.

The protein resides in the plastid. Its subcellular location is the chloroplast stroma. The catalysed reaction is N(6)-carboxybiotinyl-L-lysyl-[protein] + acetyl-CoA = N(6)-biotinyl-L-lysyl-[protein] + malonyl-CoA. It participates in lipid metabolism; malonyl-CoA biosynthesis; malonyl-CoA from acetyl-CoA: step 1/1. Component of the acetyl coenzyme A carboxylase (ACC) complex. Biotin carboxylase (BC) catalyzes the carboxylation of biotin on its carrier protein (BCCP) and then the CO(2) group is transferred by the transcarboxylase to acetyl-CoA to form malonyl-CoA. The chain is Acetyl-coenzyme A carboxylase carboxyl transferase subunit beta, chloroplastic from Gossypium hirsutum (Upland cotton).